Consider the following 304-residue polypeptide: Ribonuclease Z (304 aa).

Positions 61, 63, 65, 66, 138, 206, and 265 each coordinate Zn(2+). The active-site Proton acceptor is Asp65.

Belongs to the RNase Z family. Homodimer. Zn(2+) serves as cofactor.

The enzyme catalyses Endonucleolytic cleavage of RNA, removing extra 3' nucleotides from tRNA precursor, generating 3' termini of tRNAs. A 3'-hydroxy group is left at the tRNA terminus and a 5'-phosphoryl group is left at the trailer molecule.. In terms of biological role, zinc phosphodiesterase, which displays some tRNA 3'-processing endonuclease activity. Probably involved in tRNA maturation, by removing a 3'-trailer from precursor tRNA. This is Ribonuclease Z from Lachnoclostridium phytofermentans (strain ATCC 700394 / DSM 18823 / ISDg) (Clostridium phytofermentans).